The chain runs to 51 residues: MANYIDVLSFLAIICATVLATLAQDCSPEGARCVHDSECCFNECIDSLCQP.

An N-terminal signal peptide occupies residues 1–23 (MANYIDVLSFLAIICATVLATLA). Cystine bridges form between cysteine 26/cysteine 40, cysteine 33/cysteine 44, and cysteine 39/cysteine 49.

The protein belongs to the asilidin-1 family. In terms of tissue distribution, expressed by the venom gland. The most highly expressed peptides U-Asilidin1-Mar1a is around 3000 times higher expressed in the venom thoracic glands compared to its body tissues.

The protein localises to the secreted. Its function is as follows. Induces neurotoxic effect on honeybees, including slow movements, disorientation and paralysis. Since it provokes similar symptoms than omega-atracotoxin, it is probable that it acts in the same way by inhibiting voltage-gated calcium channels. In Eutolmus rufibarbis (Golden-tabbed robberfly), this protein is U-Asilidin(1)-Eru1a.